The chain runs to 443 residues: KH domain-containing, RNA-binding, signal transduction-associated protein 1 (443 aa).

A disordered region spans residues 1–94 (MQRRDDPASR…PLLPPSATAA (94 aa)). Residues serine 18 and serine 20 each carry the phosphoserine modification. Lysine 21 carries the post-translational modification N6-acetyllysine. A Phosphoserine modification is found at serine 29. Threonine 33 bears the Phosphothreonine mark. 2 positions are modified to asymmetric dimethylarginine; by PRMT1: arginine 45 and arginine 52. Residue serine 58 is modified to Phosphoserine; by MAPK1. Residues 61 to 72 (TQPPPLLPPSTP) are compositionally biased toward pro residues. Threonine 71 and threonine 84 each carry phosphothreonine; by MAPK1. A compositionally biased stretch (low complexity) spans 81–94 (SAPTPLLPPSATAA). Glycyl lysine isopeptide (Lys-Gly) (interchain with G-Cter in SUMO2) cross-links involve residues lysine 96 and lysine 102. An involved in homodimerization region spans residues 100 to 260 (ENKYLPELMA…VKKFLVPDMM (161 aa)). Phosphoserine is present on serine 113. A Glycyl lysine isopeptide (Lys-Gly) (interchain with G-Cter in SUMO2) cross-link involves residue lysine 139. Serine 150 carries the post-translational modification Phosphoserine. The KH domain occupies 171-197 (NFVGKILGPQGNTIKRLQEETGAKISV). The residue at position 175 (lysine 175) is an N6-acetyllysine; alternate. Lysine 175 is covalently cross-linked (Glycyl lysine isopeptide (Lys-Gly) (interchain with G-Cter in SUMO2); alternate). Position 183 is a phosphothreonine (threonine 183). Residues 280-317 (PSRGRGVSVRGRGAAPPPPPVPRGRGVGPPRGALVRGT) are disordered. 3 positions are modified to omega-N-methylarginine: arginine 282, arginine 284, and arginine 291. Low complexity predominate over residues 283 to 293 (GRGVSVRGRGA). Arginine 304 carries the post-translational modification Asymmetric dimethylarginine. A compositionally biased stretch (low complexity) spans 307-316 (GPPRGALVRG). An omega-N-methylarginine; by PRMT1 mark is found at arginine 310 and arginine 315. The residue at position 320 (arginine 320) is a Dimethylated arginine; alternate. Omega-N-methylarginine; by PRMT1; alternate is present on arginine 320. The residue at position 325 (arginine 325) is an Omega-N-methylarginine; by PRMT1. A disordered region spans residues 326–345 (GATVTRGVPPPPTVRGAPTP). Arginine 331 and arginine 340 each carry dimethylated arginine; alternate. Omega-N-methylarginine; by PRMT1; alternate is present on residues arginine 331 and arginine 340. Arginine 331 carries the post-translational modification Asymmetric dimethylarginine; alternate. Residues 351–443 (GIQRIPLPPT…AYREHPYGRY (93 aa)) form an interaction with HNRNPA1 region. Tyrosine 387 bears the Phosphotyrosine mark. Serine 390 carries the phosphoserine modification. Residues 400 to 420 (GHGELQDSYEAYGQDDWNGTR) are interaction with ZBTB7A. Residues 411-443 (YGQDDWNGTRPSLKAPPARPVKGAYREHPYGRY) are disordered. Lysine 432 is covalently cross-linked (Glycyl lysine isopeptide (Lys-Gly) (interchain with G-Cter in SUMO2)). Residues 434–443 (AYREHPYGRY) show a composition bias toward basic and acidic residues. 3 positions are modified to phosphotyrosine; by PTK6: tyrosine 435, tyrosine 440, and tyrosine 443.

The protein belongs to the KHDRBS family. In terms of assembly, self-associates to form homooligomers when bound to RNA, oligomerization appears to be limited when binding to proteins. Forms a trimeric complex in the nucleus consisting of BANP, HDAC6 and KHDRBS1/SAM68; HDAC6 keeps KHDRBS1 in a deacetylated state which inhibits the inclusion of CD44 alternate exons. The complex is disrupted by MAPK1/MAPK3-mediated phosphorylation of BANP which results in BANP export to the cytoplasm. This facilitates acetylation of KHDRBS1 and CD44 variant exon inclusion. Interacts with KHDRBS3/SLIM-2 and KHDRBS2/SLIM-1; heterooligomer formation of KHDRBS family proteins may modulate RNA substrate specificity. Interacts with RASA1, FYN, GRB2, PLCG1, SRC, CBP and PRMT1. Interacts with PTK6 (via SH3 and SH2 domains). Forms a complex with ILF2, ILF3, YLPM1, RBMX, NCOA5 and PPP1CA. Binds WBP4/FBP21 (via WW domains), FNBP4/FBP30 (via WW domains). Interacts (via Arg/Gly-rich-flanked Pro-rich regions) with FYN (via the SH3 domain). Interacts with APC, HNRNPA1. Interacts with the non-receptor tyrosine kinase SRMS; the interaction leads to phosphorylation of KHDRBS1. Interacts with ZBTB7A; negatively regulates KHDRBS1 splicing activity toward BCL2L1. In terms of processing, tyrosine phosphorylated by several non-receptor tyrosine kinases including LCK, FYN and JAK3. Also tyrosine phosphorylated by the non-receptor tyrosine kinase SRMS in an EGF-dependent manner. Phosphorylation by PTK6 negatively regulates its RNA binding ability. Phosphorylation by PTK6 at Tyr-440 dictates the nuclear localization of KHDRBS1. Phosphorylation by MAPK1 at Ser-58, Thr-71 and Thr-84 regulates CD44 alternative splicing by promoting CD44 exon v5 inclusion. Acetylated. Positively correlates with ability to bind RNA. Deacetylated by HDAC6; this regulates alternative splicing by inhibiting the inclusion of CD44 alternate exons. Post-translationally, arginine methylation is required for nuclear localization. Inhibits interaction with Src-like SH3 domains, but not interaction with WW domains of WBP4/FBP21 and FNBP4/FBP30. In terms of tissue distribution, in adult cerebellum expressed in most neuronal cell populations, specifically in cerebellar granule cells of the internal granular layer, ROR(alpha)-positive Purkinje cells, internal granular layer and molecular layer interneurons (at protein level).

The protein resides in the nucleus. It is found in the cytoplasm. It localises to the membrane. Its function is as follows. Recruited and tyrosine phosphorylated by several receptor systems, for example the T-cell, leptin and insulin receptors. Once phosphorylated, functions as an adapter protein in signal transduction cascades by binding to SH2 and SH3 domain-containing proteins. Role in G2-M progression in the cell cycle. Represses CBP-dependent transcriptional activation apparently by competing with other nuclear factors for binding to CBP. Also acts as a putative regulator of mRNA stability and/or translation rates and mediates mRNA nuclear export. Positively regulates the association of constitutive transport element (CTE)-containing mRNA with large polyribosomes and translation initiation. May not be involved in the nucleocytoplasmic export of unspliced (CTE)-containing RNA species. RNA-binding protein that plays a role in the regulation of alternative splicing and influences mRNA splice site selection and exon inclusion. Binds to RNA containing 5'-[AU]UAA-3' as a bipartite motif spaced by more than 15 nucleotides. Binds poly(A). In cooperation with HNRNPA1 modulates alternative splicing of BCL2L1 by promoting splicing toward isoform Bcl-X(S), and of SMN1. Can regulate CD44 alternative splicing in a Ras pathway-dependent manner. Can regulate alternative splicing of NRXN1 and NRXN3 in the laminin G-like domain 6 containing the evolutionary conserved neurexin alternative spliced segment 4 (AS4) involved in neurexin selective targeting to postsynaptic partners. In a neuronal activity-dependent manner cooperates synergistically with KHDRBS2/SLIM-1 in regulation of NRXN1 exon skipping at AS4. The cooperation with KHDRBS2/SLIM-1 is antagonistic for regulation of NXRN3 alternative splicing at AS4. This Mus musculus (Mouse) protein is KH domain-containing, RNA-binding, signal transduction-associated protein 1.